We begin with the raw amino-acid sequence, 574 residues long: MSEAEPSVVVAEQCRRSACDRCRGQKLRCERPVSNSSTTPCRRCLKAHVRCVTTAQPHRTKPLSSLQYLHHTESNYDPHSATVAGQLPVAAVAGLGDLDPSLLHMTGVQNPRRLSHSSSMANPVDSRPPGRTRRLSNPDHFLPHPPLHPNGVLDTDGTPLLDSIDHLPDMTASRGFGFSAALTPHSPSGSSDFFDYFRPMAEDNNRSPWMDAFTNLPPDHREGTPAGSNYRGSLTGENQFRSSLQSSRGLNGFETPQRESRHREMDIVSIKNECIARMGKLNRGLLQDVGLVNSGKVAGTLLFSQASRSTYLEVEKGRKGGQNYVIGKMLHSSKELLDILKQLERCKSTLFPPGHTERTTSTADEVTTAMTETTTLNQTGSHAPSSPLGGNPLPPLSGPLSASASHSSSCASSSSASASTSGASLLSSSTSAPSTSPAISLQLDTTLTLLFLTGYTSVIQLYEGVFSFIRDSVAANPSGSNFLPTLPKLQVDGFEVGSSTRDLQICILLQVSTHILNQIEERLHAIRDRAEGHVPAALLDTILDRSDPSQRGAKGRELCRIVRDIKEHLKHYAE.

The zn(2)-C6 fungal-type DNA-binding region spans 19-51 (CDRCRGQKLRCERPVSNSSTTPCRRCLKAHVRC). Disordered stretches follow at residues 111 to 133 (PRRL…GRTR), 242 to 262 (SSLQ…ESRH), and 376 to 404 (LNQT…SASA).

Its subcellular location is the nucleus. Transcription factor that positively regulates the expression of the gene cluster that mediates the biosynthesis of oxaleimides, cytotoxic compounds containing an unusual disubstituted succinimide moiety. This Penicillium oxalicum protein is C6 finger transcription factor poxB.